Reading from the N-terminus, the 98-residue chain is Small ribosomal subunit protein bS20 (98 aa).

Residues 1–12 are compositionally biased toward basic residues; the sequence is MAPRKPSKKVGP. Residues 1-31 form a disordered region; the sequence is MAPRKPSKKVGPQKRPSAEKRVITSKKKQLR.

This sequence belongs to the bacterial ribosomal protein bS20 family.

Functionally, binds directly to 16S ribosomal RNA. This chain is Small ribosomal subunit protein bS20, found in Chlamydia trachomatis serovar A (strain ATCC VR-571B / DSM 19440 / HAR-13).